Here is a 430-residue protein sequence, read N- to C-terminus: Oleandomycin glycosyltransferase (430 aa).

Residues 385–430 (GGTRRAADLIEAELPARHERQEPVGDRPNVGDRPAGVRSDRQRSAL) are disordered. Residues 386 to 409 (GTRRAADLIEAELPARHERQEPVG) show a composition bias toward basic and acidic residues.

It belongs to the UDP-glycosyltransferase family.

Its function is as follows. Specifically inactivates oleandomycin via 2'-O-glycosylation using UDP-glucose. In Streptomyces antibioticus, this protein is Oleandomycin glycosyltransferase (oleD).